The primary structure comprises 521 residues: 2,3-bisphosphoglycerate-independent phosphoglycerate mutase (521 aa).

Asp18 and Ser68 together coordinate Mn(2+). Ser68 functions as the Phosphoserine intermediate in the catalytic mechanism. Substrate-binding positions include His129, 158–159, Arg190, Arg196, 266–269, and Lys343; these read RD and RSDR. Mn(2+) contacts are provided by Asp410, His414, Asp451, His452, and His470.

It belongs to the BPG-independent phosphoglycerate mutase family. In terms of assembly, monomer. Mn(2+) is required as a cofactor.

It carries out the reaction (2R)-2-phosphoglycerate = (2R)-3-phosphoglycerate. The protein operates within carbohydrate degradation; glycolysis; pyruvate from D-glyceraldehyde 3-phosphate: step 3/5. Functionally, catalyzes the interconversion of 2-phosphoglycerate and 3-phosphoglycerate. This is 2,3-bisphosphoglycerate-independent phosphoglycerate mutase from Hydrogenovibrio crunogenus (strain DSM 25203 / XCL-2) (Thiomicrospira crunogena).